Reading from the N-terminus, the 770-residue chain is Capsid protein (770 aa).

The span at 647-656 (MQQQPTTTDI) shows a compositional bias: polar residues. Disordered regions lie at residues 647-678 (MQQQ…QEGE) and 697-717 (WEDS…TQTV). Basic and acidic residues predominate over residues 666-678 (RDTEVYHSSQEGE). Low complexity predominate over residues 703-717 (EESGSQSSEEETQTV).

The protein belongs to the anelloviridae capsid protein family.

It is found in the virion. In terms of biological role, self assemble to form an icosahedral capsid. This is Capsid protein from Torque teno virus (isolate Human/Japan/TRM1/1999) (TTV).